Reading from the N-terminus, the 123-residue chain is UPF0102 protein PputGB1_4524 (123 aa).

Belongs to the UPF0102 family.

In Pseudomonas putida (strain GB-1), this protein is UPF0102 protein PputGB1_4524.